Reading from the N-terminus, the 101-residue chain is Small ribosomal subunit protein uS14 (101 aa).

Residues 33-69 form a disordered region; it reads SQDASYEEKIDASTKLQKLPRDSSPSRHRNRCELSGR. Residues 51–68 show a composition bias toward basic and acidic residues; the sequence is LPRDSSPSRHRNRCELSG.

It belongs to the universal ribosomal protein uS14 family. As to quaternary structure, part of the 30S ribosomal subunit. Contacts proteins S3 and S10.

Its function is as follows. Binds 16S rRNA, required for the assembly of 30S particles and may also be responsible for determining the conformation of the 16S rRNA at the A site. This Xanthomonas axonopodis pv. citri (strain 306) protein is Small ribosomal subunit protein uS14.